Here is a 187-residue protein sequence, read N- to C-terminus: Putative manganese efflux pump MntP (187 aa).

6 helical membrane passes run 3–23 (YYTL…VSVG), 39–59 (IALC…YVGS), 65–85 (ISEF…INMI), 106–126 (LTML…SFAF), 129–149 (VNIW…SLFG), and 166–186 (LLGG…HRVF).

The protein belongs to the MntP (TC 9.B.29) family.

The protein localises to the cell inner membrane. In terms of biological role, probably functions as a manganese efflux pump. This is Putative manganese efflux pump MntP from Actinobacillus succinogenes (strain ATCC 55618 / DSM 22257 / CCUG 43843 / 130Z).